The primary structure comprises 314 residues: Methionyl-tRNA formyltransferase (314 aa).

(6S)-5,6,7,8-tetrahydrofolate is bound at residue Ser113–Pro116.

This sequence belongs to the Fmt family.

The enzyme catalyses L-methionyl-tRNA(fMet) + (6R)-10-formyltetrahydrofolate = N-formyl-L-methionyl-tRNA(fMet) + (6S)-5,6,7,8-tetrahydrofolate + H(+). Attaches a formyl group to the free amino group of methionyl-tRNA(fMet). The formyl group appears to play a dual role in the initiator identity of N-formylmethionyl-tRNA by promoting its recognition by IF2 and preventing the misappropriation of this tRNA by the elongation apparatus. In Serratia proteamaculans (strain 568), this protein is Methionyl-tRNA formyltransferase.